Consider the following 166-residue polypeptide: NAD(P)H-quinone oxidoreductase subunit I, chloroplastic (166 aa).

4Fe-4S ferredoxin-type domains lie at 55-84 (GRIH…VDWK) and 95-124 (LNYS…MTEE). Cys64, Cys67, Cys70, Cys74, Cys104, Cys107, Cys110, and Cys114 together coordinate [4Fe-4S] cluster.

Belongs to the complex I 23 kDa subunit family. In terms of assembly, NDH is composed of at least 16 different subunits, 5 of which are encoded in the nucleus. [4Fe-4S] cluster serves as cofactor.

It is found in the plastid. The protein resides in the chloroplast thylakoid membrane. It catalyses the reaction a plastoquinone + NADH + (n+1) H(+)(in) = a plastoquinol + NAD(+) + n H(+)(out). The enzyme catalyses a plastoquinone + NADPH + (n+1) H(+)(in) = a plastoquinol + NADP(+) + n H(+)(out). Functionally, NDH shuttles electrons from NAD(P)H:plastoquinone, via FMN and iron-sulfur (Fe-S) centers, to quinones in the photosynthetic chain and possibly in a chloroplast respiratory chain. The immediate electron acceptor for the enzyme in this species is believed to be plastoquinone. Couples the redox reaction to proton translocation, and thus conserves the redox energy in a proton gradient. This is NAD(P)H-quinone oxidoreductase subunit I, chloroplastic from Acanthospermum australe (Paraguayan starburr).